We begin with the raw amino-acid sequence, 226 residues long: MSGHDSGNAKRGRASFGAFVRKPVERDVVASAGEAAEQGSLEAVQAWPDDAVEVGAVVDAYGLKGWIKVATHADAGRGGDALLDARRWWLERGGERLSARILQSKTHGDTVVAHAAGVSDRDAALALRGFRVFVRREDFPALAADEFYWVDLIGLEVVNEQSVALGTVSGMIDNGVHSIMRVEYPAVGKDGQPTTDERLIPFVGVYVKTVDQAARRIVVDWEADYS.

A PRC barrel domain is found at 144–225 (ADEFYWVDLI…RIVVDWEADY (82 aa)).

It belongs to the RimM family. As to quaternary structure, binds ribosomal protein uS19.

It is found in the cytoplasm. Functionally, an accessory protein needed during the final step in the assembly of 30S ribosomal subunit, possibly for assembly of the head region. Essential for efficient processing of 16S rRNA. May be needed both before and after RbfA during the maturation of 16S rRNA. It has affinity for free ribosomal 30S subunits but not for 70S ribosomes. This chain is Ribosome maturation factor RimM, found in Burkholderia ambifaria (strain ATCC BAA-244 / DSM 16087 / CCUG 44356 / LMG 19182 / AMMD) (Burkholderia cepacia (strain AMMD)).